Here is a 175-residue protein sequence, read N- to C-terminus: Large ribosomal subunit protein uL10 (175 aa).

The protein belongs to the universal ribosomal protein uL10 family. In terms of assembly, part of the ribosomal stalk of the 50S ribosomal subunit. The N-terminus interacts with L11 and the large rRNA to form the base of the stalk. The C-terminus forms an elongated spine to which L12 dimers bind in a sequential fashion forming a multimeric L10(L12)X complex.

Functionally, forms part of the ribosomal stalk, playing a central role in the interaction of the ribosome with GTP-bound translation factors. This Synechococcus sp. (strain CC9311) protein is Large ribosomal subunit protein uL10.